Reading from the N-terminus, the 211-residue chain is Transcription antitermination protein NusB (211 aa).

This sequence belongs to the NusB family.

In terms of biological role, involved in transcription antitermination. Required for transcription of ribosomal RNA (rRNA) genes. Binds specifically to the boxA antiterminator sequence of the ribosomal RNA (rrn) operons. The polypeptide is Transcription antitermination protein NusB (Gloeobacter violaceus (strain ATCC 29082 / PCC 7421)).